The primary structure comprises 101 residues: uncharacterized protein (101 aa).

The signal sequence occupies residues 1–25 (MISIPFRSTMSRTLVFIILPTVLSC).

This is an uncharacterized protein from Saccharomyces cerevisiae (strain ATCC 204508 / S288c) (Baker's yeast).